Reading from the N-terminus, the 451-residue chain is Zinc finger MYND domain-containing protein 10 homolog (451 aa).

Cysteine 412, cysteine 415, cysteine 423, cysteine 426, cysteine 432, cysteine 436, histidine 444, and cysteine 448 together coordinate Zn(2+). An MYND-type zinc finger spans residues 412 to 448 (CATCQAKAKKKCACCKKVHYCSRDCQLKDWPQHKLVC).

It belongs to the ZMYND10 family. Specifically expressed in cells with flagella and motile cilia: chordotonal sensory neurons and sperm.

It localises to the cytoplasm. The protein resides in the cell projection. The protein localises to the cilium. Its subcellular location is the dynein axonemal particle. Plays a role in axonemal structure organization and motility. May be involved in axonemal pre-assembly of inner and outer dynein arms (IDA and ODA, respectively) for proper axoneme building for cilia motility. The chain is Zinc finger MYND domain-containing protein 10 homolog from Drosophila melanogaster (Fruit fly).